The sequence spans 145 residues: Large ribosomal subunit protein uL16 (145 aa).

The span at 76-95 shows a compositional bias: basic and acidic residues; sequence PKTKTPAETRMGKGKGEPEH. The disordered stretch occupies residues 76–97; it reads PKTKTPAETRMGKGKGEPEHFV.

The protein belongs to the universal ribosomal protein uL16 family. In terms of assembly, part of the 50S ribosomal subunit.

Its function is as follows. Binds 23S rRNA and is also seen to make contacts with the A and possibly P site tRNAs. This chain is Large ribosomal subunit protein uL16, found in Salinibacter ruber (strain DSM 13855 / M31).